The primary structure comprises 435 residues: MKLLLLALFLSISASCLAEDITKISESRIPNEDAVPDYEAKWRLGAIQKLWNERRKMGHTPMTKFSPPGFPNADIFFKNETATATRTLKHRFAWALLLWAITEGKVTSKTSAVYDSTSGNTGSAEAYMCTLVNVPYYAVVADNLEKEKVKQIESFGGKIIKVPVALRNAKAKEFADKNHGFYMNQFGNAEKAEEFHESGDFYFESTNVYHEIIVQLKKDKEQIVKIPDYFVHSAGTGGTISSVGRYVARYGAPTKVVLSDSQYSLFYDYVIGHKFTNQSGAGIWTPPGIAGIGYGYDIEPVWYGETTSLTRNVIHEAMKMPDIASVATMRILDEKGYNVGPSTSLNFLVSLYKAYQNKARKSAIKHRLTIVTLACDPGDFYRSTYLNNEWVEKSFKKFGGVMGMECWKKLIQESIDTGSDFYSKGLTMCPGAFKV.

Positions 1 to 18 (MKLLLLALFLSISASCLA) are cleaved as a signal peptide. Asparagine 79 is a glycosylation site (N-linked (GlcNAc...) asparagine). An N6-(pyridoxal phosphate)lysine modification is found at lysine 89. A pyridoxal 5'-phosphate-binding site is contributed by 235–239 (GTGGT). An N-linked (GlcNAc...) asparagine glycan is attached at asparagine 277. Serine 342 is a pyridoxal 5'-phosphate binding site.

Belongs to the cysteine synthase/cystathionine beta-synthase family. Highly divergent.

The chain is Putative pyridoxal-phosphate dependent protein F13B12.4 from Caenorhabditis elegans.